Consider the following 838-residue polypeptide: Ras-interacting protein RIP3 (838 aa).

Disordered stretches follow at residues 66 to 97, 157 to 290, and 305 to 336; these read VSTSNNNATSGNSTPPNNAISPNQQQQQQQQA, KPTT…TSPK, and NSKTLQKSDKTSEKENKQQQPDSSKTQQQQQA. 3 stretches are compositionally biased toward low complexity: residues 67–97, 157–241, and 248–284; these read STSNNNATSGNSTPPNNAISPNQQQQQQQQA, KPTT…QQKP, and PQNISQPQNISQQQNTNNVQQNNQQQQQQQQQQQQQQ. Residues 310-321 are compositionally biased toward basic and acidic residues; sequence QKSDKTSEKENK. The CRIM domain maps to 441–515; that stretch reads QLKVRVIEKA…KDEVLVLCPN (75 aa). 2 disordered regions span residues 522 to 581 and 594 to 646; these read KSSS…QQTQ and QQQQ…GPDA. Low complexity-rich tracts occupy residues 537 to 556, 563 to 581, and 594 to 620; these read NNNNSVNSNSSNNSNSSNNN, QPQQSQQQQQQTQQTQQTQ, and QQQQQQQQQHPQQIQQQLSSNQLQPDQ. The segment covering 621 to 631 has biased composition (gly residues); that stretch reads VGGGGGGGGGN. The RBD domain maps to 648-717; sequence LVVKITLPDS…GGADLILVSR (70 aa).

The protein belongs to the SIN1 family. Interacts with activated RasG. Part of a complex, TORC2, consisting of tor, lst8, piaA and ripA. Additional proteins, such as 14-3-3 and heat-shock proteins, may also belong to the TORC2 complex.

Functionally, component of a Ras-regulated pathway involved in integrating chemotaxis and signal relay pathways that are essential for aggregation. The sequence is that of Ras-interacting protein RIP3 (ripA) from Dictyostelium discoideum (Social amoeba).